The sequence spans 390 residues: Mannitol-1-phosphate 5-dehydrogenase (390 aa).

3–14 (ALHFGAGNIGRG) contributes to the NAD(+) binding site.

The protein belongs to the mannitol dehydrogenase family.

It carries out the reaction D-mannitol 1-phosphate + NAD(+) = beta-D-fructose 6-phosphate + NADH + H(+). The chain is Mannitol-1-phosphate 5-dehydrogenase from Buchnera aphidicola subsp. Baizongia pistaciae (strain Bp).